Here is a 353-residue protein sequence, read N- to C-terminus: Ion-translocating oxidoreductase complex subunit D (353 aa).

3 consecutive transmembrane segments (helical) span residues 20–39, 68–88, and 129–149; these read LMRL…WYFF, PISH…LGIC, and VMLL…LTLV. Thr-187 carries the post-translational modification FMN phosphoryl threonine. 4 helical membrane-spanning segments follow: residues 215–235, 238–258, 267–287, and 300–320; these read LALG…FLIS, AIAW…SFIG, ASTM…FILT, and IIVG…GGYP.

This sequence belongs to the NqrB/RnfD family. As to quaternary structure, the complex is composed of six subunits: RnfA, RnfB, RnfC, RnfD, RnfE and RnfG. Requires FMN as cofactor.

Its subcellular location is the cell inner membrane. Functionally, part of a membrane-bound complex that couples electron transfer with translocation of ions across the membrane. The sequence is that of Ion-translocating oxidoreductase complex subunit D from Colwellia psychrerythraea (strain 34H / ATCC BAA-681) (Vibrio psychroerythus).